A 466-amino-acid chain; its full sequence is Ribulose bisphosphate carboxylase large chain (466 aa).

Residue Lys-4 is modified to N6,N6,N6-trimethyllysine. Residues Asn-113 and Thr-163 each coordinate substrate. The active-site Proton acceptor is Lys-165. Lys-167 provides a ligand contact to substrate. Mg(2+) contacts are provided by Lys-191, Asp-193, and Glu-194. Lys-191 bears the N6-carboxylysine mark. His-284 serves as the catalytic Proton acceptor. Arg-285, His-317, and Ser-369 together coordinate substrate.

The protein belongs to the RuBisCO large chain family. Type I subfamily. Heterohexadecamer of 8 large chains and 8 small chains; disulfide-linked. The disulfide link is formed within the large subunit homodimers. Mg(2+) serves as cofactor. In terms of processing, the disulfide bond which can form in the large chain dimeric partners within the hexadecamer appears to be associated with oxidative stress and protein turnover.

Its subcellular location is the plastid. The protein resides in the chloroplast. The enzyme catalyses 2 (2R)-3-phosphoglycerate + 2 H(+) = D-ribulose 1,5-bisphosphate + CO2 + H2O. It carries out the reaction D-ribulose 1,5-bisphosphate + O2 = 2-phosphoglycolate + (2R)-3-phosphoglycerate + 2 H(+). Its function is as follows. RuBisCO catalyzes two reactions: the carboxylation of D-ribulose 1,5-bisphosphate, the primary event in carbon dioxide fixation, as well as the oxidative fragmentation of the pentose substrate in the photorespiration process. Both reactions occur simultaneously and in competition at the same active site. The chain is Ribulose bisphosphate carboxylase large chain from Ruttya fruticosa (African azalea).